The chain runs to 96 residues: uncharacterized protein (96 aa).

Helical transmembrane passes span 2-22 (FIFN…ICYF), 38-58 (AGLK…TVML), and 68-88 (LTLA…QLIV).

The protein localises to the membrane. This is an uncharacterized protein from Schizosaccharomyces pombe (strain 972 / ATCC 24843) (Fission yeast).